Consider the following 303-residue polypeptide: Pseudouridine-5'-phosphate glycosidase (303 aa).

Catalysis depends on Glu-24, which acts as the Proton donor. Residues Lys-85 and Val-105 each coordinate substrate. Asp-137 is a binding site for Mn(2+). 139 to 141 (SAD) serves as a coordination point for substrate. The active-site Nucleophile is Lys-158.

This sequence belongs to the pseudouridine-5'-phosphate glycosidase family. In terms of assembly, homotrimer. Mn(2+) is required as a cofactor.

It carries out the reaction D-ribose 5-phosphate + uracil = psi-UMP + H2O. Catalyzes the reversible cleavage of pseudouridine 5'-phosphate (PsiMP) to ribose 5-phosphate and uracil. Functions biologically in the cleavage direction, as part of a pseudouridine degradation pathway. This Herpetosiphon aurantiacus (strain ATCC 23779 / DSM 785 / 114-95) protein is Pseudouridine-5'-phosphate glycosidase.